Reading from the N-terminus, the 403-residue chain is S-adenosylmethionine synthase (403 aa).

An ATP-binding site is contributed by 141-146; it reads GQGSVD.

Belongs to the AdoMet synthase 2 family. The cofactor is Mg(2+).

It carries out the reaction L-methionine + ATP + H2O = S-adenosyl-L-methionine + phosphate + diphosphate. The protein operates within amino-acid biosynthesis; S-adenosyl-L-methionine biosynthesis; S-adenosyl-L-methionine from L-methionine: step 1/1. Its function is as follows. Catalyzes the formation of S-adenosylmethionine from methionine and ATP. In Methanococcus aeolicus (strain ATCC BAA-1280 / DSM 17508 / OCM 812 / Nankai-3), this protein is S-adenosylmethionine synthase.